Consider the following 822-residue polypeptide: Serine/threonine-protein phosphatase 4 regulatory subunit 3 (822 aa).

In terms of domain architecture, WH1 spans 1-100 (MTDTRRRVKV…DEIWEKICQV (100 aa)). Positions 744–822 (TSQLSASGHP…PLTKKARLGS (79 aa)) are disordered. Residues 761-774 (SPGSPESPGSVSKS) show a composition bias toward low complexity. Residues 793-808 (YPDDDEEDDDNDEEEK) are compositionally biased toward acidic residues.

The protein belongs to the SMEK family. In terms of assembly, serine/threonine-protein phosphatase 4 (PP4) occurs in different assemblies of the catalytic and one or more regulatory subunits.

Regulatory subunit of serine/threonine-protein phosphatase 4. This chain is Serine/threonine-protein phosphatase 4 regulatory subunit 3 (smek1), found in Xenopus laevis (African clawed frog).